We begin with the raw amino-acid sequence, 225 residues long: MSSLHKFKAYFGMVPLDDYEDEYLDEPEPARRPARPARDSGRDPYLDRDDRDFAEPAFSKAAYAPGRRDDLDDDFDRYDGPRHSSRVEPVAVRSARPSASGAVRGSTRGALAVDTRSERVESRRGPLFDEGGPLSKITTLRPRDYGEARTIGERFRDGTPVIMDLVEMSNADAKRLVDFAAGLAFALRGSFDKVATKVFLLSPADIDVSAEERRRIAETGFYSQK.

The interval 22 to 116 (EYLDEPEPAR…TRGALAVDTR (95 aa)) is disordered. Composition is skewed to basic and acidic residues over residues 28-54 (EPARRPARPARDSGRDPYLDRDDRDFA) and 77-86 (RYDGPRHSSR).

This sequence belongs to the SepF family. As to quaternary structure, homodimer. Interacts with FtsZ.

Its subcellular location is the cytoplasm. Its function is as follows. Cell division protein that is part of the divisome complex and is recruited early to the Z-ring. Probably stimulates Z-ring formation, perhaps through the cross-linking of FtsZ protofilaments. Its function overlaps with FtsA. In Rhodococcus jostii (strain RHA1), this protein is Cell division protein SepF.